Here is a 1045-residue protein sequence, read N- to C-terminus: Elongation factor 3 (1045 aa).

7 HEAT repeats span residues 5-42 (DQSLKVLEELFKNLSVATADNRVEAAQEVASFLNGNII), 43-85 (EHDI…PSVE), 86-123 (PFVITLVPEICAKAGDKDKDVQAVASKTLVAISKAINP), 125-162 (AIKAYLPHLTKSLETTNKWQEKVSVLAAISALVDAAKE), 166-203 (LRMPELIPVLSETMWDTKKEVKEAATATMTKATETVDN), 205-241 (DIERFIPQLISCIADPKQVPETVHLLGATTFVAEVTP), and 242-279 (ATLSIMVPLLSRGLAERETSIKRKAAVIIDNMCKLVED). Residues I42, H44, and S83 each contribute to the ADP site. The ADP site is built by T392, H396, and E397. ABC transporter domains lie at 426-641 (DEGE…YYEL) and 667-993 (VKVS…KKED). ADP contacts are provided by N703, E922, N925, and H951. Positions 974–1045 (SGHNWVSGQG…AYVSSDDEDF (72 aa)) are disordered. The segment covering 1007 to 1031 (GGKKKKKLSSAELRKKKKERMKKKK) has biased composition (basic residues).

This sequence belongs to the ABC transporter superfamily. ABCF family. EF3 subfamily. As to quaternary structure, monomer.

Its subcellular location is the cytoplasm. The protein localises to the cytosol. It catalyses the reaction ATP + H2O = ADP + phosphate + H(+). The protein operates within protein biosynthesis; polypeptide chain elongation. Functionally, ribosome-dependent ATPase that functions in cytoplasmic translation elongation. Required for the ATP-dependent release of deacylated tRNA from the ribosomal E-site during protein biosynthesis. Stimulates the eEF1A-dependent binding of aminoacyl-tRNA to the ribosomal A-site, which has reduced affinity for tRNA as long as the E-site is occupied. Assists translation termination by stimulating the release of nascent protein from the ribosome by release factors. In Candida glabrata (strain ATCC 2001 / BCRC 20586 / JCM 3761 / NBRC 0622 / NRRL Y-65 / CBS 138) (Yeast), this protein is Elongation factor 3 (TEF3).